The sequence spans 596 residues: Actin-histidine N-methyltransferase (596 aa).

S-adenosyl-L-methionine is bound by residues Arg75, 104–106, Arg254, 275–279, and 325–327; these read EGY, DMCNH, and NGF. The region spanning 94–314 is the SET domain; sequence DGFEISNFAD…EGEQIYIFYG (221 aa). Residues 556 to 596 form a disordered region; that stretch reads QCKDLNGTQEDPPGGGAVVKEIEKHDPSAKRTEGEPKDAGK. The span at 575-596 shows a compositional bias: basic and acidic residues; the sequence is KEIEKHDPSAKRTEGEPKDAGK.

This sequence belongs to the class V-like SAM-binding methyltransferase superfamily. SETD3 actin-histidine methyltransferase family.

It is found in the cytoplasm. It carries out the reaction L-histidyl-[protein] + S-adenosyl-L-methionine = N(tele)-methyl-L-histidyl-[protein] + S-adenosyl-L-homocysteine + H(+). In terms of biological role, protein-histidine N-methyltransferase that specifically mediates 3-methylhistidine (tele-methylhistidine) methylation of actin at 'His-73'. Does not have protein-lysine N-methyltransferase activity and probably only catalyzes histidine methylation of actin. The sequence is that of Actin-histidine N-methyltransferase from Danio rerio (Zebrafish).